Here is a 418-residue protein sequence, read N- to C-terminus: Phosphoglycerate kinase (418 aa).

(2R)-3-phosphoglycerate is bound by residues Val24, Asp25, Phe26, Asn27, Arg40, Ser63, His64, Gly66, Arg67, Leu122, Arg123, His169, and Arg170. ADP is bound at residue Gly213. CDP is bound at residue Gly213. 2 residues coordinate AMP: Ala214 and Lys215. Ala214 contributes to the ATP binding site. Ala214 contacts Mg(2+). Ala217 and Asp218 together coordinate Mg(2+). Position 218 (Asp218) interacts with CDP. Residue Lys219 coordinates AMP. Lys219 lines the ATP pocket. Gly237 lines the ADP pocket. CDP is bound at residue Gly237. AMP-binding residues include Gly238 and Gly312. 2 residues coordinate ATP: Gly238 and Gly312. Positions 337 and 342 each coordinate CDP. Phe342 provides a ligand contact to ADP. AMP is bound at residue Glu343. 3 residues coordinate ATP: Glu343, Asp374, and Thr375. A Mg(2+)-binding site is contributed by Asp374.

Belongs to the phosphoglycerate kinase family. Monomer. Requires Mg(2+) as cofactor.

It carries out the reaction (2R)-3-phosphoglycerate + ATP = (2R)-3-phospho-glyceroyl phosphate + ADP. The protein operates within carbohydrate degradation; glycolysis; pyruvate from D-glyceraldehyde 3-phosphate: step 2/5. The chain is Phosphoglycerate kinase (PGK) from Euplotes crassus.